We begin with the raw amino-acid sequence, 233 residues long: 5'-methylthioadenosine/S-adenosylhomocysteine nucleosidase (233 aa).

Residue Glu-12 is the Proton acceptor of the active site. Substrate is bound by residues Gly-78, Ile-152, and 173 to 174; that span reads ME. Catalysis depends on Asp-197, which acts as the Proton donor.

Belongs to the PNP/UDP phosphorylase family. MtnN subfamily. In terms of assembly, homodimer.

It catalyses the reaction S-adenosyl-L-homocysteine + H2O = S-(5-deoxy-D-ribos-5-yl)-L-homocysteine + adenine. It carries out the reaction S-methyl-5'-thioadenosine + H2O = 5-(methylsulfanyl)-D-ribose + adenine. The catalysed reaction is 5'-deoxyadenosine + H2O = 5-deoxy-D-ribose + adenine. It participates in amino-acid biosynthesis; L-methionine biosynthesis via salvage pathway; S-methyl-5-thio-alpha-D-ribose 1-phosphate from S-methyl-5'-thioadenosine (hydrolase route): step 1/2. Catalyzes the irreversible cleavage of the glycosidic bond in both 5'-methylthioadenosine (MTA) and S-adenosylhomocysteine (SAH/AdoHcy) to adenine and the corresponding thioribose, 5'-methylthioribose and S-ribosylhomocysteine, respectively. Also cleaves 5'-deoxyadenosine, a toxic by-product of radical S-adenosylmethionine (SAM) enzymes, into 5-deoxyribose and adenine. Thus, is required for in vivo function of the radical SAM enzymes biotin synthase and lipoic acid synthase, that are inhibited by 5'-deoxyadenosine accumulation. The polypeptide is 5'-methylthioadenosine/S-adenosylhomocysteine nucleosidase (Yersinia pestis bv. Antiqua (strain Angola)).